The chain runs to 363 residues: Putative C-&gt;U-editing enzyme APOBEC-4 (363 aa).

The CMP/dCMP-type deaminase domain maps to 61-177 (PQTKHLTFYE…AWNREALRSL (117 aa)). His93 serves as a coordination point for Zn(2+). Glu95 functions as the Proton donor in the catalytic mechanism. Cys127 and Cys134 together coordinate Zn(2+).

Belongs to the cytidine and deoxycytidylate deaminase family. Zn(2+) is required as a cofactor.

Functionally, putative C to U editing enzyme whose physiological substrate is not yet known. The polypeptide is Putative C-&gt;U-editing enzyme APOBEC-4 (APOBEC4) (Macaca fascicularis (Crab-eating macaque)).